Here is a 362-residue protein sequence, read N- to C-terminus: Putative RING-H2 finger protein ATL21B (362 aa).

The first 23 residues, 1-23 (MIISKQLFLLFFLLFFIFPLRHA), serve as a signal peptide directing secretion. A helical membrane pass occupies residues 234 to 254 (VVAVLICLSIIGAVILFVTCI). Residues 316-358 (CPICLSEYVSKETVRFIPECDHCFHAKCIDVWLKIHGSCPLCR) form an RING-type; atypical zinc finger.

This sequence belongs to the RING-type zinc finger family. ATL subfamily.

It localises to the membrane. It carries out the reaction S-ubiquitinyl-[E2 ubiquitin-conjugating enzyme]-L-cysteine + [acceptor protein]-L-lysine = [E2 ubiquitin-conjugating enzyme]-L-cysteine + N(6)-ubiquitinyl-[acceptor protein]-L-lysine.. Its pathway is protein modification; protein ubiquitination. In Arabidopsis thaliana (Mouse-ear cress), this protein is Putative RING-H2 finger protein ATL21B (ATL21B).